A 75-amino-acid polypeptide reads, in one-letter code: Metallothionein-like protein 1B (75 aa).

Belongs to the metallothionein superfamily. Type 15 family.

Functionally, metallothioneins have a high content of cysteine residues that bind various heavy metals. In Vicia faba (Broad bean), this protein is Metallothionein-like protein 1B (MT1B).